The primary structure comprises 494 residues: Psoralen synthase (494 aa).

A helical transmembrane segment spans residues 12 to 29 (YFFSLFLVTIFLYKWLTL). Heme is bound at residue C436.

It belongs to the cytochrome P450 family.

The protein localises to the endoplasmic reticulum membrane. It is found in the microsome membrane. It catalyses the reaction (7S)-marmesin + reduced [NADPH--hemoprotein reductase] + O2 = psoralen + acetone + oxidized [NADPH--hemoprotein reductase] + 2 H2O + H(+). Inhibited by columbianetin. In terms of biological role, involved in linear furanocumarin (psoralen) biosynthesis. Converts marmesin to psoralen. In Ammi majus (Bishop's weed), this protein is Psoralen synthase (CYP71AJ1).